The following is a 102-amino-acid chain: Protein RnfH (102 aa).

Belongs to the UPF0125 (RnfH) family.

This Haemophilus influenzae (strain PittEE) protein is Protein RnfH.